The chain runs to 354 residues: Guanine nucleotide-binding protein G(o) subunit alpha (354 aa).

A lipid anchor (N-myristoyl glycine) is attached at glycine 2. Cysteine 3 carries the S-palmitoyl cysteine lipid modification. Positions 32-354 (KDVKLLLLGA…AYNLRGCGLY (323 aa)) constitute a G-alpha domain. Positions 35–48 (KLLLLGAGESGKST) are G1 motif. Residues glutamate 43, lysine 46, serine 47, threonine 48, serine 152, leucine 176, arginine 177, threonine 178, and arginine 179 each coordinate GTP. A Mg(2+)-binding site is contributed by serine 47. The interval 174–182 (DILRTRVKT) is G2 motif. Residue threonine 182 coordinates Mg(2+). The interval 197–206 (FRLFDVGGQR) is G3 motif. Residues 266–273 (ILFLNKKD) are G4 motif. Positions 270, 273, and 325 each coordinate GTP. The G5 motif stretch occupies residues 324 to 329 (TCATDT).

Belongs to the G-alpha family. G(i/o/t/z) subfamily. As to quaternary structure, g proteins are composed of 3 units; alpha, beta and gamma.

It carries out the reaction GTP + H2O = GDP + phosphate + H(+). Guanine nucleotide-binding proteins (G proteins) function as transducers downstream of G protein-coupled receptors (GPCRs) in numerous signaling cascades. The alpha chain contains the guanine nucleotide binding site and alternates between an active, GTP-bound state and an inactive, GDP-bound state. Signaling by an activated GPCR promotes GDP release and GTP binding. The alpha subunit has a low GTPase activity that converts bound GTP to GDP, thereby terminating the signal. Both GDP release and GTP hydrolysis are modulated by numerous regulatory proteins. Signaling is mediated via effector proteins, such as adenylate cyclase. Inhibits adenylate cyclase activity, leading to decreased intracellular cAMP levels. The sequence is that of Guanine nucleotide-binding protein G(o) subunit alpha (gna0) from Xenopus laevis (African clawed frog).